We begin with the raw amino-acid sequence, 336 residues long: tRNA N6-adenosine threonylcarbamoyltransferase (336 aa).

Positions 111 and 115 each coordinate Fe cation. Substrate contacts are provided by residues Val-134–Gly-138, Asp-167, Gly-180, Asp-184, and Asn-272. Asp-300 contributes to the Fe cation binding site.

This sequence belongs to the KAE1 / TsaD family. Fe(2+) is required as a cofactor.

It localises to the cytoplasm. The catalysed reaction is L-threonylcarbamoyladenylate + adenosine(37) in tRNA = N(6)-L-threonylcarbamoyladenosine(37) in tRNA + AMP + H(+). Its function is as follows. Required for the formation of a threonylcarbamoyl group on adenosine at position 37 (t(6)A37) in tRNAs that read codons beginning with adenine. Is involved in the transfer of the threonylcarbamoyl moiety of threonylcarbamoyl-AMP (TC-AMP) to the N6 group of A37, together with TsaE and TsaB. TsaD likely plays a direct catalytic role in this reaction. This chain is tRNA N6-adenosine threonylcarbamoyltransferase, found in Caldicellulosiruptor saccharolyticus (strain ATCC 43494 / DSM 8903 / Tp8T 6331).